A 406-amino-acid polypeptide reads, in one-letter code: Tryptophan synthase beta chain (406 aa).

Residue Lys-99 is modified to N6-(pyridoxal phosphate)lysine.

It belongs to the TrpB family. In terms of assembly, tetramer of two alpha and two beta chains. Pyridoxal 5'-phosphate serves as cofactor.

It catalyses the reaction (1S,2R)-1-C-(indol-3-yl)glycerol 3-phosphate + L-serine = D-glyceraldehyde 3-phosphate + L-tryptophan + H2O. It participates in amino-acid biosynthesis; L-tryptophan biosynthesis; L-tryptophan from chorismate: step 5/5. Functionally, the beta subunit is responsible for the synthesis of L-tryptophan from indole and L-serine. This Chelativorans sp. (strain BNC1) protein is Tryptophan synthase beta chain.